The primary structure comprises 128 residues: Large ribosomal subunit protein uL22 (128 aa).

Residues 1-20 form a disordered region; the sequence is MANGHRSQIKRERNAVKDTR. Positions 9–20 are enriched in basic and acidic residues; that stretch reads IKRERNAVKDTR.

It belongs to the universal ribosomal protein uL22 family. In terms of assembly, part of the 50S ribosomal subunit.

Its function is as follows. This protein binds specifically to 23S rRNA; its binding is stimulated by other ribosomal proteins, e.g. L4, L17, and L20. It is important during the early stages of 50S assembly. It makes multiple contacts with different domains of the 23S rRNA in the assembled 50S subunit and ribosome. Functionally, the globular domain of the protein is located near the polypeptide exit tunnel on the outside of the subunit, while an extended beta-hairpin is found that lines the wall of the exit tunnel in the center of the 70S ribosome. This chain is Large ribosomal subunit protein uL22, found in Lachnospira eligens (strain ATCC 27750 / DSM 3376 / VPI C15-48 / C15-B4) (Eubacterium eligens).